Consider the following 243-residue polypeptide: MSIPLLYYPLSTQNQRVESFEILSNEEQSKIYTTDTLPSASEMDELIWAAYRQIFSEHQILKFTRQRFLESQLRFNQIKVREFIRGLAISDSFRKLNYDVNNNYRFVELCVQRILGRDVYNEKEKIAWSIVICNKGVIGFIDCLINSQEYLENFGDNIVPYQRRRIIFQRVNGETPFNLKTPRYGIEFRDKLVKPQFIWQGAIRRFRPQEQRPRAGDPVLFLNMVYDLNITPKFNRYPGLVNR.

Positions 11–191 constitute a PBS-linker domain; the sequence is STQNQRVESF…PRYGIEFRDK (181 aa).

Belongs to the phycobilisome linker protein family. The phycobilisome is a hemidiscoidal structure that is composed of two distinct substructures: a core complex and a number of rods radiating from the core.

The protein localises to the plastid. The protein resides in the chloroplast thylakoid membrane. Its function is as follows. Rod-core linker protein required for attachment of phycocyanin to allophycocyanin in cores of phycobilisomes. Functionally, linker polypeptides determine the state of aggregation and the location of the disk-shaped phycobiliprotein units within the phycobilisome and modulate their spectroscopic properties in order to mediate a directed and optimal energy transfer. The protein is Phycobilisome rod-core linker polypeptide cpcG (cpcG) of Galdieria sulphuraria (Red alga).